The sequence spans 153 residues: MRESELIVRRIREGTVIDHIDGGRGLQVLSALGIDGGDGSLITVALNVPSGKFSKKDIIKVENRFLKDDDTNRLALIAPSATVNIIRDYKLAEKRRVALPNEIGRIFRCTNPDCITNSSERIESVMDVASREGPVLKCRYCSRILDVSRMDYT.

Cys109, Cys114, Cys138, and Cys141 together coordinate Zn(2+).

This sequence belongs to the PyrI family. Contains catalytic and regulatory chains. It depends on Zn(2+) as a cofactor.

In terms of biological role, involved in allosteric regulation of aspartate carbamoyltransferase. The sequence is that of Aspartate carbamoyltransferase regulatory chain from Cenarchaeum symbiosum (strain A).